Here is a 472-residue protein sequence, read N- to C-terminus: ATP-dependent rRNA helicase rrp3 (472 aa).

The interval 1 to 52 is disordered; it reads MRDVKKRKIAHEAPEHGSDTESTSSHKSVAQQDDPLETQDEATATESRPAPK. A compositionally biased stretch (basic and acidic residues) spans 10-19; it reads AHEAPEHGSD. The span at 20–31 shows a compositional bias: polar residues; the sequence is TESTSSHKSVAQ. The Q motif motif lies at 52–80; that stretch reads KSFKDLGIIDQLCEACETMGYKAPTPIQA. Positions 83–254 constitute a Helicase ATP-binding domain; it reads IPLALQGRDL…RASLSNPLRV (172 aa). 96 to 103 is a binding site for ATP; the sequence is AETGSGKT. Residues 202 to 205 carry the DEAD box motif; that stretch reads DEAD. Positions 282-426 constitute a Helicase C-terminal domain; the sequence is YLVYLLNEFV…EYELEKDEVM (145 aa). The tract at residues 444–472 is disordered; that stretch reads KNFDEKRGTKAKKFGKGKRSRDEMDQEEG. Residues 452–462 show a composition bias toward basic residues; it reads TKAKKFGKGKR.

Belongs to the DEAD box helicase family. DDX47/RRP3 subfamily. Interacts with the SSU processome.

The protein localises to the nucleus. The enzyme catalyses ATP + H2O = ADP + phosphate + H(+). Functionally, ATP-dependent rRNA helicase required for pre-ribosomal RNA processing. Involved in the maturation of the 35S-pre-rRNA and to its cleavage to mature 18S rRNA. The protein is ATP-dependent rRNA helicase rrp3 of Aspergillus fumigatus (strain ATCC MYA-4609 / CBS 101355 / FGSC A1100 / Af293) (Neosartorya fumigata).